The primary structure comprises 325 residues: Glutarate 2-hydroxylase (325 aa).

Positions 160, 162, and 292 each coordinate Fe cation.

This sequence belongs to the glutarate hydroxylase family. In terms of assembly, homotetramer. Fe(2+) serves as cofactor.

The enzyme catalyses glutarate + 2-oxoglutarate + O2 = (S)-2-hydroxyglutarate + succinate + CO2. Its pathway is amino-acid degradation. Acts as an alpha-ketoglutarate-dependent dioxygenase catalyzing hydroxylation of glutarate (GA) to L-2-hydroxyglutarate (L2HG). Functions in a L-lysine degradation pathway that proceeds via cadaverine, glutarate and L-2-hydroxyglutarate. This Klebsiella pneumoniae (strain 342) protein is Glutarate 2-hydroxylase.